Consider the following 260-residue polypeptide: Zinc import ATP-binding protein ZnuC (260 aa).

Residues 18–234 (IRLQEVAVTF…PEYQKLFGSH (217 aa)) enclose the ABC transporter domain. An ATP-binding site is contributed by 50–57 (GNNGAGKT). The segment at 241–260 (VFPHDHHDHSGPALAGGGRG) is disordered.

It belongs to the ABC transporter superfamily. Zinc importer (TC 3.A.1.15.5) family. In terms of assembly, the complex is composed of two ATP-binding proteins (ZnuC), two transmembrane proteins (ZnuB) and a solute-binding protein (ZnuA).

It is found in the cell inner membrane. The catalysed reaction is Zn(2+)(out) + ATP(in) + H2O(in) = Zn(2+)(in) + ADP(in) + phosphate(in) + H(+)(in). In terms of biological role, part of the ABC transporter complex ZnuABC involved in zinc import. Responsible for energy coupling to the transport system. The chain is Zinc import ATP-binding protein ZnuC from Halorhodospira halophila (strain DSM 244 / SL1) (Ectothiorhodospira halophila (strain DSM 244 / SL1)).